The primary structure comprises 396 residues: NADH-quinone oxidoreductase subunit D 1 (396 aa).

It belongs to the complex I 49 kDa subunit family. As to quaternary structure, NDH-1 is composed of 14 different subunits. Subunits NuoB, C, D, E, F, and G constitute the peripheral sector of the complex.

It is found in the cell inner membrane. It carries out the reaction a quinone + NADH + 5 H(+)(in) = a quinol + NAD(+) + 4 H(+)(out). Its function is as follows. NDH-1 shuttles electrons from NADH, via FMN and iron-sulfur (Fe-S) centers, to quinones in the respiratory chain. The immediate electron acceptor for the enzyme in this species is believed to be ubiquinone. Couples the redox reaction to proton translocation (for every two electrons transferred, four hydrogen ions are translocated across the cytoplasmic membrane), and thus conserves the redox energy in a proton gradient. The chain is NADH-quinone oxidoreductase subunit D 1 from Sinorhizobium medicae (strain WSM419) (Ensifer medicae).